The following is a 231-amino-acid chain: Ureidoacrylate amidohydrolase RutB (231 aa).

The active-site Proton acceptor is the D25. Residue K134 is part of the active site. C167 (nucleophile) is an active-site residue.

This sequence belongs to the isochorismatase family. RutB subfamily.

The enzyme catalyses (Z)-3-ureidoacrylate + H2O + H(+) = (Z)-3-aminoacrylate + NH4(+) + CO2. It catalyses the reaction (Z)-3-ureidoacrylate + H2O = (Z)-3-aminoacrylate + carbamate + H(+). The catalysed reaction is (Z)-2-methylureidoacrylate + H2O + H(+) = (Z)-2-methylaminoacrylate + NH4(+) + CO2. In terms of biological role, hydrolyzes ureidoacrylate to form aminoacrylate and carbamate. The carbamate hydrolyzes spontaneously, thereby releasing one of the nitrogen atoms of the pyrimidine ring as ammonia and one of its carbon atoms as CO2. This is Ureidoacrylate amidohydrolase RutB from Escherichia coli O18:K1:H7 (strain IHE3034 / ExPEC).